A 628-amino-acid polypeptide reads, in one-letter code: ATP-dependent zinc metalloprotease FtsH (628 aa).

Over 1–7 the chain is Stromal; sequence MKLSWKT. Residues 8–28 form a helical membrane-spanning segment; that stretch reads LLLWSLPIFVIGFFFWQGFLG. At 29–118 the chain is on the lumenal side; the sequence is PTTTDVGSNI…AHPPKSTSAV (90 aa). The chain crosses the membrane as a helical span at residues 119–139; sequence WGLLGNLLFPLLLVGGLAFLF. Topologically, residues 140–628 are stromal; sequence RRSNNASGGP…PEKNYYISQF (489 aa). 213 to 220 is an ATP binding site; that stretch reads GPPGTGKT. Histidine 434 serves as a coordination point for Zn(2+). Glutamate 435 is a catalytic residue. Zn(2+)-binding residues include histidine 438 and aspartate 512.

It in the central section; belongs to the AAA ATPase family. In the C-terminal section; belongs to the peptidase M41 family. Homohexamer. Zn(2+) serves as cofactor.

The protein resides in the plastid. It localises to the chloroplast thylakoid membrane. Its function is as follows. Acts as a processive, ATP-dependent zinc metallopeptidase. The protein is ATP-dependent zinc metalloprotease FtsH of Pyropia yezoensis (Susabi-nori).